Reading from the N-terminus, the 613-residue chain is Leucine-rich repeat and immunoglobulin-like domain-containing nogo receptor-interacting protein 1 (613 aa).

The first 34 residues, 1 to 34 (MLAGEASMRSPILACWQPILLLMLGSILSGSATG), serve as a signal peptide directing secretion. 2 disulfides stabilise this stretch: cysteine 35–cysteine 41 and cysteine 39–cysteine 50. Residues 35 to 64 (CPPRCECSAQERAVLCHRKRFMVVPEGIPT) form the LRRNT domain. Residues 35–554 (CPPRCECSAQ…FDIKTLIIAT (520 aa)) are Extracellular-facing. LRR repeat units follow at residues 65–86 (ETRQ…EFAN), 89–110 (HLEE…AFNN), 113–134 (NLRT…VFTG), 137–158 (NLTK…MFQD), 161–182 (NLKS…AFSG), 185–206 (SLEQ…ALSH), 209–230 (GLIV…SFKR), 257–278 (NLTS…SVRH), 281–302 (YLRF…MLHD), 305–326 (RLQE…AFRG), and 329–350 (YLRI…AFHS). A glycan (N-linked (GlcNAc...) asparagine) is linked at asparagine 137. Residue asparagine 195 is glycosylated (N-linked (GlcNAc...) asparagine). N-linked (GlcNAc...) asparagine glycans are attached at residues asparagine 257, asparagine 267, and asparagine 286. N-linked (GlcNAc...) asparagine glycosylation is present at asparagine 334. Residues 362 to 416 (NPLACDCRLLWVFRRRWRLNFNKQQPTCSTPEFVQGKEFKDFPDVLLPNYFTCRR) form the LRRCT domain. Cystine bridges form between cysteine 366/cysteine 389, cysteine 368/cysteine 414, and cysteine 439/cysteine 490. The Ig-like C2-type domain maps to 404-508 (PDVLLPNYFT…DTMLAHLHVR (105 aa)). N-linked (GlcNAc...) asparagine glycans are attached at residues asparagine 485, asparagine 498, asparagine 519, asparagine 530, and asparagine 535. Residues 555–575 (TMGFISFLGVVLFCLVLLFLW) form a helical membrane-spanning segment. Residues 576 to 613 (SRGKGNTKHNIEIEYVPRKSDAGISSADAPRKFNMKMI) are Cytoplasmic-facing.

In terms of assembly, homotetramer. Forms ternary complex with RTN4R/NGFR and RTN4R/TNFRSF19. In terms of processing, N-glycosylated. Contains predominantly high-mannose glycans.

It localises to the cell membrane. Functionally, functional component of the Nogo receptor signaling complex (RTN4R/NGFR) in RhoA activation responsible for some inhibition of axonal regeneration by myelin-associated factors. Is also an important negative regulator of oligodentrocyte differentiation and axonal myelination. This chain is Leucine-rich repeat and immunoglobulin-like domain-containing nogo receptor-interacting protein 1 (LINGO1), found in Gallus gallus (Chicken).